The sequence spans 426 residues: Proline--tRNA ligase (426 aa).

The protein belongs to the class-II aminoacyl-tRNA synthetase family. ProS type 2 subfamily. In terms of assembly, homodimer.

The protein localises to the cytoplasm. The catalysed reaction is tRNA(Pro) + L-proline + ATP = L-prolyl-tRNA(Pro) + AMP + diphosphate. Its function is as follows. Catalyzes the attachment of proline to tRNA(Pro) in a two-step reaction: proline is first activated by ATP to form Pro-AMP and then transferred to the acceptor end of tRNA(Pro). This chain is Proline--tRNA ligase, found in Rickettsia africae (strain ESF-5).